Consider the following 126-residue polypeptide: Thiocyanate hydrolase subunit alpha (126 aa).

As to quaternary structure, heterododecamer consisting of 4 alpha, 4 beta, and 4 gamma subunits.

The enzyme catalyses thiocyanate + H2O + 2 H(+) = carbonyl sulfide + NH4(+). It functions in the pathway organosulfur degradation; thiocyanate degradation. Functionally, involved in the degradation of thiocyanate. This is Thiocyanate hydrolase subunit alpha (scnA) from Thiobacillus thioparus.